The primary structure comprises 449 residues: tRNA (guanine(37)-N(1))-methyltransferase (449 aa).

S-adenosyl-L-methionine contacts are provided by residues H216, 254–255 (DL), 282–283 (DG), and N345.

Belongs to the class I-like SAM-binding methyltransferase superfamily. TRM5/TYW2 family. In terms of assembly, monomer.

The protein localises to the mitochondrion matrix. Its subcellular location is the nucleus. The protein resides in the cytoplasm. The catalysed reaction is guanosine(37) in tRNA + S-adenosyl-L-methionine = N(1)-methylguanosine(37) in tRNA + S-adenosyl-L-homocysteine + H(+). Its function is as follows. Specifically methylates the N1 position of guanosine-37 in various cytoplasmic and mitochondrial tRNAs. Methylation is not dependent on the nature of the nucleoside 5' of the target nucleoside. This is the first step in the biosynthesis of wybutosine (yW), a modified base adjacent to the anticodon of tRNAs and required for accurate decoding. This Candida albicans (strain SC5314 / ATCC MYA-2876) (Yeast) protein is tRNA (guanine(37)-N(1))-methyltransferase.